Here is an 806-residue protein sequence, read N- to C-terminus: Minor extracellular protease Vpr (806 aa).

A signal peptide spans 1–28 (MKKGIIRFLLVSFVLFFALSTGITGVQA). A propeptide spanning residues 29–160 (APASSKTSAD…TISEDAVSPQ (132 aa)) is cleaved from the precursor. The Inhibitor I9 domain occupies 57-142 (TVIVELKEKS…AVYPNVTYKT (86 aa)). The Peptidase S8 domain occupies 158–597 (SPQMDDSAPY…ARIMNAIKAD (440 aa)). Active-site charge relay system residues include Asp-189 and His-233. Residues 383 to 461 (ELVEAGIGEA…KLSLEDGEKL (79 aa)) enclose the PA domain. The active-site Charge relay system is Ser-534.

It belongs to the peptidase S8 family. Post-translationally, probably undergoes C-terminal processing or proteolysis. Auto-processed to form active enzymes of several different molecular weights.

Its subcellular location is the secreted. The protein resides in the cell wall. Activity is inhibited by phenylmethylsulfonyl fluoride (PMSF), but not by EDTA. Serine protease. Involved in the production of the competence and sporulation stimulating factor CSF. Is directly involved in the processing of pro-CSF to CSF. Can also cleave pro-PhrA to PhrA, but cannot cleave pro-PhrE. Shows fibrinolytic activity in vitro. Not essential for growth or sporulation. In Bacillus subtilis (strain 168), this protein is Minor extracellular protease Vpr.